Here is a 319-residue protein sequence, read N- to C-terminus: ATP-dependent 6-phosphofructokinase (319 aa).

Residue Gly11 coordinates ATP. An ADP-binding site is contributed by 21-25 (RAVTR). ATP is bound by residues 72 to 73 (RF) and 102 to 105 (GDGS). Asp103 serves as a coordination point for Mg(2+). Residue 125-127 (SID) coordinates substrate. Asp127 serves as the catalytic Proton acceptor. Residue Arg154 participates in ADP binding. Substrate-binding positions include Arg162 and 169 to 171 (MGR). ADP contacts are provided by residues 185–187 (GAD) and 213–215 (KKH). Substrate contacts are provided by residues Glu222, Arg243, and 249 to 252 (HMQR).

It belongs to the phosphofructokinase type A (PFKA) family. ATP-dependent PFK group I subfamily. Prokaryotic clade 'B1' sub-subfamily. Homotetramer. The cofactor is Mg(2+).

Its subcellular location is the cytoplasm. The enzyme catalyses beta-D-fructose 6-phosphate + ATP = beta-D-fructose 1,6-bisphosphate + ADP + H(+). Its pathway is carbohydrate degradation; glycolysis; D-glyceraldehyde 3-phosphate and glycerone phosphate from D-glucose: step 3/4. Allosterically activated by ADP and other diphosphonucleosides, and allosterically inhibited by phosphoenolpyruvate. Functionally, catalyzes the phosphorylation of D-fructose 6-phosphate to fructose 1,6-bisphosphate by ATP, the first committing step of glycolysis. The sequence is that of ATP-dependent 6-phosphofructokinase from Lactobacillus gasseri (strain ATCC 33323 / DSM 20243 / BCRC 14619 / CIP 102991 / JCM 1131 / KCTC 3163 / NCIMB 11718 / NCTC 13722 / AM63).